Here is a 251-residue protein sequence, read N- to C-terminus: Probable transcriptional regulatory protein cbdbA400 (251 aa).

The protein belongs to the TACO1 family.

The protein localises to the cytoplasm. This is Probable transcriptional regulatory protein cbdbA400 from Dehalococcoides mccartyi (strain CBDB1).